A 213-amino-acid polypeptide reads, in one-letter code: Urease accessory protein UreE (213 aa).

Residues 170–213 form a disordered region; that stretch reads EHHGHSHSHSHSHSHDHDHDHDHDHDHDHQHGPSCSHGHHHGHR. Positions 182 to 200 are enriched in basic and acidic residues; it reads HSHDHDHDHDHDHDHDHQH.

It belongs to the UreE family.

It is found in the cytoplasm. Functionally, involved in urease metallocenter assembly. Binds nickel. Probably functions as a nickel donor during metallocenter assembly. This is Urease accessory protein UreE from Burkholderia mallei (strain NCTC 10229).